A 267-amino-acid polypeptide reads, in one-letter code: Neural/ectodermal development factor IMP-L2 (267 aa).

Positions 1–25 are cleaved as a signal peptide; it reads MEAKMNLHVCALALLLFGSIATVRG. 2 consecutive Ig-like C2-type domains span residues 48–149 and 174–260; these read PRNR…KTIY and PRII…TFVY. Cystine bridges form between Cys-80–Cys-139 and Cys-195–Cys-244.

Detected in several sites including the ventral neuroectoderm, the tracheal pits, the pharynx and esophagus, and specific neuronal cell bodies, where it is primarily expressed.

It localises to the secreted. It is found in the extracellular space. Its function is as follows. Essential developmental role during embryogenesis, in particular the normal development of the nervous system. May be involved in some aspect of cell adhesion. The chain is Neural/ectodermal development factor IMP-L2 (ImpL2) from Drosophila melanogaster (Fruit fly).